A 739-amino-acid chain; its full sequence is Alcohol dehydrogenase (quinone), dehydrogenase subunit (739 aa).

The first 35 residues, 1–35, serve as a signal peptide directing secretion; that stretch reads MISAVFGKRRSLSRTLTAGTICAALISGYATMASA. Residue Glu97 coordinates pyrroloquinoline quinone. Residues Cys143 and Cys144 are joined by a disulfide bond. Arg149 contacts pyrroloquinoline quinone. Residue Glu217 participates in Ca(2+) binding. Thr279 lines the pyrroloquinoline quinone pocket. 2 residues coordinate Ca(2+): Asn299 and Asp344. Catalysis depends on Asp344, which acts as the Proton acceptor. Positions 371 and 585 each coordinate pyrroloquinoline quinone. The Cytochrome c domain occupies 635 to 739; that stretch reads FDSKRTDNGY…NADGIPEQLP (105 aa). 4 residues coordinate heme c: Cys651, Cys654, His655, and Met694.

It belongs to the bacterial PQQ dehydrogenase family. As to quaternary structure, the alcohol dehydrogenase multicomponent enzyme system is composed of a dehydrogenase subunit I (AdhA) and a cytochrome c subunit II (AdhB). It depends on pyrroloquinoline quinone as a cofactor. Requires Ca(2+) as cofactor. Heme c serves as cofactor.

It is found in the cell membrane. It catalyses the reaction ethanol + a ubiquinone = a ubiquinol + acetaldehyde. Dehydrogenase component of the alcohol dehydrogenase multicomponent enzyme system which is involved in the production of acetic acid and in the ethanol oxidase respiratory chain. Quinohemoprotein alcohol dehydrogenase (ADH) catalyzes the oxidation of ethanol to acetaldehyde by transferring electrons to the ubiquinone embedded in the membrane phospholipids. The electrons transfer from ethanol to membranous ubiquinone occurs from pyrroloquinoline quinone (PQQ) to one heme c in subunit I (AdhA), and finally to two heme c in subunit II (AdhB). Besides ubiquinone reduction, ADH also has a ubiquinol (QH2) oxidation reaction which mediates electron transfer from ubiquinol to the non-energy generating bypass oxidase system. The electrons transfer occurs from ubiquinol (QH2) to the additional heme c within subunit II (AdhB). In Komagataeibacter europaeus (Gluconacetobacter europaeus), this protein is Alcohol dehydrogenase (quinone), dehydrogenase subunit.